Here is a 356-residue protein sequence, read N- to C-terminus: Proline-rich protein 19 (356 aa).

Over residues 1 to 12 (MDTQGPVSQPFQ) the composition is skewed to polar residues. 4 disordered regions span residues 1–53 (MDTQ…RDPP), 95–143 (LVPG…ELSG), 216–255 (INSP…RGSL), and 312–331 (PSSP…SPPS). The segment covering 19-29 (RVRRRKTRRER) has biased composition (basic residues).

In terms of assembly, interacts with CNTD1.

The protein localises to the nucleus. It localises to the chromosome. Its function is as follows. Promotes meiotic crossing over formation through its interaction with CNTD1 by participating in the crossover differentiation step of crossover-specific recombination intermediates. This is Proline-rich protein 19 from Homo sapiens (Human).